A 168-amino-acid chain; its full sequence is S-ribosylhomocysteine lyase (168 aa).

Positions 54, 58, and 128 each coordinate Fe cation.

Belongs to the LuxS family. As to quaternary structure, homodimer. The cofactor is Fe cation.

It catalyses the reaction S-(5-deoxy-D-ribos-5-yl)-L-homocysteine = (S)-4,5-dihydroxypentane-2,3-dione + L-homocysteine. Involved in the synthesis of autoinducer 2 (AI-2) which is secreted by bacteria and is used to communicate both the cell density and the metabolic potential of the environment. The regulation of gene expression in response to changes in cell density is called quorum sensing. Catalyzes the transformation of S-ribosylhomocysteine (RHC) to homocysteine (HC) and 4,5-dihydroxy-2,3-pentadione (DPD). The polypeptide is S-ribosylhomocysteine lyase (Histophilus somni (strain 2336) (Haemophilus somnus)).